The primary structure comprises 136 residues: Acyl carrier protein 2, chloroplastic (136 aa).

Residues 1–51 (MASIAASASISLQARPRQLAIAASQVKSFSNGRRSSLSFNLRQLPTRLTVS) constitute a chloroplast transit peptide. Positions 56–131 (PETVDKVCAV…QAAALIEELL (76 aa)) constitute a Carrier domain. Ser91 bears the O-(pantetheine 4'-phosphoryl)serine mark.

The protein belongs to the acyl carrier protein (ACP) family. 4'-phosphopantetheine is transferred from CoA to a specific serine of apo-ACP by acpS. This modification is essential for activity because fatty acids are bound in thioester linkage to the sulfhydryl of the prosthetic group.

The protein localises to the plastid. It localises to the chloroplast. Carrier of the growing fatty acid chain in fatty acid biosynthesis. The polypeptide is Acyl carrier protein 2, chloroplastic (ACP2) (Arabidopsis thaliana (Mouse-ear cress)).